A 662-amino-acid polypeptide reads, in one-letter code: DNA helicase/primase complex-associated protein (662 aa).

Belongs to the herpesviridae HEPA family. In terms of assembly, associates with the primase and the helicase to form the helicase-primase complex. Interacts with the origin-binding protein. Interacts with the polymerase catalytic subunit.

The protein localises to the host nucleus. Functionally, component of the helicase/primase complex. Unwinds the DNA at the replication forks and generates single-stranded DNA for both leading and lagging strand synthesis. The primase synthesizes short RNA primers on the lagging strand that the polymerase presumably elongates using dNTPs. The primase-associated factor has no known catalytic activity in the complex and may serve to facilitate the formation of the replisome by directly interacting with the origin-binding protein and the polymerase. In Human herpesvirus 6A (strain Uganda-1102) (HHV-6 variant A), this protein is DNA helicase/primase complex-associated protein (U74).